A 351-amino-acid polypeptide reads, in one-letter code: Thiamine-phosphate synthase (351 aa).

The segment at M1–Q129 is unknown. Residues L65–E85 are disordered. The segment at V130–L351 is thiamine-phosphate synthase. Residues Q177–K181 and N209 each bind 4-amino-2-methyl-5-(diphosphooxymethyl)pyrimidine. Mg(2+)-binding residues include D210 and D229. S248 contributes to the 4-amino-2-methyl-5-(diphosphooxymethyl)pyrimidine binding site. A 2-[(2R,5Z)-2-carboxy-4-methylthiazol-5(2H)-ylidene]ethyl phosphate-binding site is contributed by T274–T276. A 4-amino-2-methyl-5-(diphosphooxymethyl)pyrimidine-binding site is contributed by K277. G304 contacts 2-[(2R,5Z)-2-carboxy-4-methylthiazol-5(2H)-ylidene]ethyl phosphate.

It belongs to the thiamine-phosphate synthase family. Mg(2+) serves as cofactor.

It carries out the reaction 2-[(2R,5Z)-2-carboxy-4-methylthiazol-5(2H)-ylidene]ethyl phosphate + 4-amino-2-methyl-5-(diphosphooxymethyl)pyrimidine + 2 H(+) = thiamine phosphate + CO2 + diphosphate. The enzyme catalyses 2-(2-carboxy-4-methylthiazol-5-yl)ethyl phosphate + 4-amino-2-methyl-5-(diphosphooxymethyl)pyrimidine + 2 H(+) = thiamine phosphate + CO2 + diphosphate. The catalysed reaction is 4-methyl-5-(2-phosphooxyethyl)-thiazole + 4-amino-2-methyl-5-(diphosphooxymethyl)pyrimidine + H(+) = thiamine phosphate + diphosphate. The protein operates within cofactor biosynthesis; thiamine diphosphate biosynthesis; thiamine phosphate from 4-amino-2-methyl-5-diphosphomethylpyrimidine and 4-methyl-5-(2-phosphoethyl)-thiazole: step 1/1. Its function is as follows. Condenses 4-methyl-5-(beta-hydroxyethyl)thiazole monophosphate (THZ-P) and 2-methyl-4-amino-5-hydroxymethyl pyrimidine pyrophosphate (HMP-PP) to form thiamine monophosphate (TMP). This chain is Thiamine-phosphate synthase, found in Nostoc punctiforme (strain ATCC 29133 / PCC 73102).